A 204-amino-acid chain; its full sequence is MTFKGFSKKDFQTMQIPGLEARMAGIQNDIQPKFKAVGEELTTYLSAKLGDEMFLHIARHQRRSVNPPESTWLAICHDKRGYKKHPHFQVGLFDNYLFIWLAFIYENEESAKIANRFLKEKKLLAELPDTFAISPDHTEEKTFPVHDGHLETTLERFRDVKKGEFLVGKIYLPDDSHLSPGKDFIKEAEMVLDKLIPLYKAALQ.

Belongs to the UPF0637 family.

The polypeptide is UPF0637 protein lwe1043 (Listeria welshimeri serovar 6b (strain ATCC 35897 / DSM 20650 / CCUG 15529 / CIP 8149 / NCTC 11857 / SLCC 5334 / V8)).